A 178-amino-acid polypeptide reads, in one-letter code: Peptidyl-prolyl cis-trans isomerase H (178 aa).

Positions 14–177 (FFDISIGDVP…LPVKITECGQ (164 aa)) constitute a PPIase cyclophilin-type domain.

The protein belongs to the cyclophilin-type PPIase family. PPIase H subfamily.

It is found in the nucleus. It carries out the reaction [protein]-peptidylproline (omega=180) = [protein]-peptidylproline (omega=0). In terms of biological role, PPIases accelerate the folding of proteins. It catalyzes the cis-trans isomerization of proline imidic peptide bonds in oligopeptides. This is Peptidyl-prolyl cis-trans isomerase H (cyp7) from Rhizopus delemar (strain RA 99-880 / ATCC MYA-4621 / FGSC 9543 / NRRL 43880) (Mucormycosis agent).